A 334-amino-acid polypeptide reads, in one-letter code: Ornithine carbamoyltransferase, catabolic (334 aa).

Residues S57–T60, Q84, R108, and H135–Q138 contribute to the carbamoyl phosphate site. Residues N169, D233, and S237 to M238 each bind L-ornithine. Residues C275–L276 and R320 contribute to the carbamoyl phosphate site.

This sequence belongs to the aspartate/ornithine carbamoyltransferase superfamily. OTCase family.

The protein resides in the cytoplasm. It carries out the reaction carbamoyl phosphate + L-ornithine = L-citrulline + phosphate + H(+). The protein operates within amino-acid degradation; L-arginine degradation via ADI pathway; carbamoyl phosphate from L-arginine: step 2/2. Functionally, reversibly catalyzes the transfer of the carbamoyl group from carbamoyl phosphate (CP) to the N(epsilon) atom of ornithine (ORN) to produce L-citrulline. In Salmonella typhimurium (strain LT2 / SGSC1412 / ATCC 700720), this protein is Ornithine carbamoyltransferase, catabolic (arcB).